Here is a 228-residue protein sequence, read N- to C-terminus: Vesicle transport protein SEC20 (228 aa).

Topologically, residues 1–199 (MAAPQDVHVR…LITKYNRREL (199 aa)) are cytoplasmic. A coiled-coil region spans residues 37 to 90 (LSALTELNTKVKEKFQQLRHRIQDLEQLAKEQDKESEKQLLLQEVENHKKQMLS). A helical; Anchor for type IV membrane protein transmembrane segment spans residues 200–220 (TDKLLIFLALALFLATVLYIV). At 221–228 (KKRLFPFL) the chain is on the lumenal side.

The protein belongs to the SEC20 family. In terms of assembly, component of a SNARE complex consisting of STX18, USE1L, BNIP1/SEC20L and SEC22B. Interacts directly with STX18, RINT1/TIP20L and NAPA. Interacts with ZW10 through RINT1. Interacts with BCL2. Interacts with RNF186. Interacts with RNF185. Interacts with SQSTM1; increased by 'Lys-63'-linked polyubiquitination of BNIP1. As to quaternary structure, (Microbial infection) Interacts with adenovirus E1B 19K protein; plays a role in the suppression of cell apoptosis by the viral protein. Polyubiquitinated. 'Lys-63'-linked polyubiquitination by RNF185 increases the interaction with the autophagy receptor SQSTM1. Undergoes 'Lys-29'- and 'Lys-63'-linked polyubiquitination by RNF186 that may regulate BNIP1 localization to the mitochondrion. Isoform 1 is highly expressed in heart, brain, liver skeletal muscle and pancreas. Isoform 3 is moderately expressed in placenta, lung and kidney. Isoform 4 is highly expressed in testis and small intestine.

The protein localises to the endoplasmic reticulum membrane. It is found in the mitochondrion membrane. Its function is as follows. As part of a SNARE complex may be involved in endoplasmic reticulum membranes fusion and be required for the maintenance of endoplasmic reticulum organization. Also plays a role in apoptosis. It is for instance required for endoplasmic reticulum stress-induced apoptosis. As a substrate of RNF185 interacting with SQSTM1, might also be involved in mitochondrial autophagy. The protein is Vesicle transport protein SEC20 (BNIP1) of Homo sapiens (Human).